A 244-amino-acid polypeptide reads, in one-letter code: 5-oxoprolinase subunit A (244 aa).

Belongs to the LamB/PxpA family. Forms a complex composed of PxpA, PxpB and PxpC.

The catalysed reaction is 5-oxo-L-proline + ATP + 2 H2O = L-glutamate + ADP + phosphate + H(+). Functionally, catalyzes the cleavage of 5-oxoproline to form L-glutamate coupled to the hydrolysis of ATP to ADP and inorganic phosphate. This is 5-oxoprolinase subunit A from Escherichia coli O17:K52:H18 (strain UMN026 / ExPEC).